The primary structure comprises 609 residues: Snake venom metalloproteinase-disintegrin-like mocarhagin (609 aa).

The N-terminal stretch at 1 to 20 (MIQALLVAICLAVFPYQGSS) is a signal peptide. Residues 21 to 191 (IILESGNVND…DEPIEKSSQL (171 aa)) constitute a propeptide that is removed on maturation. The 196-residue stretch at 205–400 (KYIEFYVVVD…DRPQCILNKP (196 aa)) folds into the Peptidase M12B domain. Residues Glu208 and Asp292 each coordinate Ca(2+). A glycan (N-linked (GlcNAc...) asparagine) is linked at Asn303. Disulfide bonds link Cys316-Cys395, Cys356-Cys379, and Cys358-Cys363. 2 residues coordinate Zn(2+): His341 and His345. Positions 395, 398, 410, 413, 415, 417, 420, and 423 each coordinate Ca(2+). Positions 408-494 (PPVCGNYFVE…KCPKDSFQRN (87 aa)) constitute a Disintegrin domain. 14 disulfides stabilise this stretch: Cys411-Cys440, Cys422-Cys435, Cys424-Cys430, Cys434-Cys457, Cys448-Cys454, Cys453-Cys479, Cys466-Cys486, Cys473-Cys505, Cys498-Cys510, Cys517-Cys567, Cys532-Cys575, Cys545-Cys555, Cys562-Cys601, and Cys595-Cys606. Positions 472 to 474 (DCD) match the D/ECD-tripeptide motif. Asn507 is a glycosylation site (N-linked (GlcNAc...) asparagine).

Belongs to the venom metalloproteinase (M12B) family. P-III subfamily. P-IIIa sub-subfamily. Monomer. Zn(2+) is required as a cofactor. Expressed by the venom gland.

The protein localises to the secreted. With respect to regulation, inhibited by EDTA and diisopropyl fluorophosphate (DFP). Also inhibited by an excess of zinc or calcium ions. Its function is as follows. Snake venom zinc metalloproteinase that inhibits platelet aggregation by cleaving platelet glycoprotein Ib alpha (GP1BA) at Glu-298/Asp-299, and abolishes binding of von Willebrand factor (VWF) to GPIBA. Cleaves P-selectin glycoprotein ligand-1 (PSGL-1/SELPLG) at Tyr-51/Asp-52, and completely abolishes the binding of PSGL-1 to P-selectin. Anionic amino acid sequences containing sulfated tyrosines are needed for cleavages. Inhibits the thrombin-induced platelet aggregation, and the thrombin-induced release of ATP and ADP. Has lectin activity (inhibited by heparin). The sequence is that of Snake venom metalloproteinase-disintegrin-like mocarhagin from Naja mossambica (Mozambique spitting cobra).